The following is a 189-amino-acid chain: Mediator of RNA polymerase II transcription subunit 10b (189 aa).

The disordered stretch occupies residues M1–T22.

This sequence belongs to the Mediator complex subunit 10 family. In terms of assembly, component of the Mediator complex.

It is found in the nucleus. Component of the Mediator complex, a coactivator involved in the regulated transcription of nearly all RNA polymerase II-dependent genes. Mediator functions as a bridge to convey information from gene-specific regulatory proteins to the basal RNA polymerase II transcription machinery. The Mediator complex, having a compact conformation in its free form, is recruited to promoters by direct interactions with regulatory proteins and serves for the assembly of a functional preinitiation complex with RNA polymerase II and the general transcription factors. The chain is Mediator of RNA polymerase II transcription subunit 10b (MED10B) from Arabidopsis thaliana (Mouse-ear cress).